We begin with the raw amino-acid sequence, 518 residues long: 3-octaprenyl-4-hydroxybenzoate carboxy-lyase (518 aa).

Asn177 is a binding site for Mn(2+). Residues 180–182 (IYR), 194–196 (RWL), and 199–200 (RG) each bind prenylated FMN. Glu243 contacts Mn(2+). The active-site Proton donor is Asp318.

Belongs to the UbiD family. Homohexamer. It depends on prenylated FMN as a cofactor. Mn(2+) is required as a cofactor.

The protein localises to the cell membrane. The enzyme catalyses a 4-hydroxy-3-(all-trans-polyprenyl)benzoate + H(+) = a 2-(all-trans-polyprenyl)phenol + CO2. Its pathway is cofactor biosynthesis; ubiquinone biosynthesis. Its function is as follows. Catalyzes the decarboxylation of 3-octaprenyl-4-hydroxy benzoate to 2-octaprenylphenol, an intermediate step in ubiquinone biosynthesis. This is 3-octaprenyl-4-hydroxybenzoate carboxy-lyase from Burkholderia lata (strain ATCC 17760 / DSM 23089 / LMG 22485 / NCIMB 9086 / R18194 / 383).